We begin with the raw amino-acid sequence, 1231 residues long: RNA-binding protein 33 (1231 aa).

The segment covering 1 to 13 has biased composition (gly residues); that stretch reads MAAALGAGGGAGA. 2 disordered regions span residues 1–168 and 219–261; these read MAAA…EEEQ and SQVA…FKTE. N-acetylalanine is present on Ala2. Over residues 20–36 the composition is skewed to basic and acidic residues; that stretch reads QFDKPGAERSWRRRAAD. Residues 37 to 49 are compositionally biased toward acidic residues; sequence EDWDSELEDDLLG. At Ser41 the chain carries Phosphoserine. The segment covering 82 to 108 has biased composition (polar residues); sequence FSSQGVTISLNTTSGIVTSFELSDNTN. Acidic residues-rich tracts occupy residues 112–124 and 153–168; these read GEQE…GDDE and LTED…EEEQ. Over residues 224–240 the composition is skewed to basic and acidic residues; the sequence is ETHEGGMETLELQKDIK. Residues 241–252 are compositionally biased toward acidic residues; that stretch reads EESDEEDDDDEE. A phosphoserine mark is found at Ser243 and Ser271. 2 disordered regions span residues 297 to 436 and 452 to 761; these read FEER…KNIH and PLLP…NLRE. Residues 305–316 are compositionally biased toward basic residues; it reads KQGRYGSRRGGR. Positions 327–344 are enriched in basic and acidic residues; sequence GDQRRDNSERGRMKEHRP. Residues 360–379 show a composition bias toward pro residues; that stretch reads LIPPPQPQPPPPPPPPPPQQ. Residues 380 to 398 show a composition bias toward low complexity; it reads QPIRSLFQQQQLQPLLPLQ. The span at 469 to 483 shows a compositional bias: pro residues; that stretch reads FPGPPEFPQHTPGPV. Position 520 is an asymmetric dimethylarginine (Arg520). 4 stretches are compositionally biased toward pro residues: residues 531–540, 604–618, 632–647, and 661–682; these read SPPPPPPPPT, FIPP…PGQP, LHPP…PQPQ, and PLQP…PPQH. Composition is skewed to polar residues over residues 713–728 and 736–759; these read QTAQ…QCTP and AASQ…NSNL. Ser792 and Ser816 each carry phosphoserine. Disordered stretches follow at residues 796–840, 876–932, and 998–1080; these read RAVV…ETRL, ERLA…FPGA, and ETPH…MRQQ. Over residues 820–829 the composition is skewed to basic and acidic residues; that stretch reads QPKEEAKPEA. A coiled-coil region spans residues 840-891; sequence LYRLKIEEQKRLREEILKQKELRRQQQAGARKKELLERLAQQQQQQQQQQHQ. Low complexity predominate over residues 880–901; that stretch reads QQQQQQQQQQHQPQQQQQQPQQ. Phosphoserine is present on residues Ser1002 and Ser1010. Lys1019 participates in a covalent cross-link: Glycyl lysine isopeptide (Lys-Gly) (interchain with G-Cter in SUMO2). A phosphoserine mark is found at Ser1032 and Ser1051.

As to quaternary structure, associates with the NXF1-NXT1 RNA export complex. Interacts with ALKBH5; facilitating ALKBH5 recruitment to m6A-containing transcripts. Interacts with SENP1; promoting ALKBH5 deSUMOylation and subsequent activation.

It localises to the nucleus. The protein localises to the cytoplasm. Functionally, RNA reader protein, which recognizes and binds specific RNAs, thereby regulating RNA metabolic processes, such as mRNA export, mRNA stability and/or translation. Binds a subset of intronless RNAs containing GC-rich elements, such as NORAD, and promotes their nuclear export by recruiting target RNAs to components of the NXF1-NXT1 RNA export machinery. Specifically recognizes and binds N6-methyladenosine (m6A)-containing mRNAs, promoting their demethylation by ALKBH5. Acts as an molecular adapter, which (1) promotes ALKBH5 recruitment to m6A-containing transcripts and (2) activates ALKBH5 demethylase activity by recruiting SENP1, leading to ALKBH5 deSUMOylation and subsequent activation. This is RNA-binding protein 33 from Mus musculus (Mouse).